The chain runs to 229 residues: N-acetyltransferase MPR1 (229 aa).

Residues 65–219 (FNLEIESGKT…DAIIYGKDLT (155 aa)) form the N-acetyltransferase domain. Asn135 serves as a coordination point for substrate. 145-150 (RGQKVG) contributes to the CoA binding site. 172-173 (NL) contributes to the substrate binding site.

The protein belongs to the acetyltransferase family. As to quaternary structure, homodimer. Not glycosylated.

The protein resides in the cytoplasm. Its subcellular location is the mitochondrion. The catalysed reaction is L-glutamate 5-semialdehyde + acetyl-CoA = N-acetyl-L-glutamate 5-semialdehyde + CoA + H(+). Its function is as follows. N-acetyltransferase involved in oxidative stress resistance. Acetylates the toxic proline metabolism intermediate (S)-1-pyrroline-5-carboxylate (P5C), or more likely its spontaneously forming tautomer glutamate-5-semialdehyde (GSA) into N-acetyl-GSA for arginine synthesis in the mitochondria. P5C has been shown to increase the levels of reactive oxygen species (ROS) in the cell by inhibiting the function of the respiratory chain in the mitochondria. The enzyme is able to reduce intracellular ROS levels under P5C-induced oxidative stress and protects cells from damage by oxidative stress. Also acetylates and thereby detoxifies the proline analog azetidine-2-carboxylate (AZC), however it is unlikely that AZC is a natural substrate as it occurs only in plants belonging to the Lilaceae family. Does not acetylate proline. This Saccharomyces cerevisiae (Baker's yeast) protein is N-acetyltransferase MPR1.